We begin with the raw amino-acid sequence, 118 residues long: uncharacterized protein (118 aa).

3 helical membrane-spanning segments follow: residues 22–44 (IIAS…FSIA), 54–71 (LSPL…PVLR), and 78–99 (PILS…VEWL).

The protein localises to the cell membrane. This is an uncharacterized protein from Archaeoglobus fulgidus (strain ATCC 49558 / DSM 4304 / JCM 9628 / NBRC 100126 / VC-16).